The chain runs to 500 residues: NAD(P)H-quinone oxidoreductase chain 4, chloroplastic (500 aa).

The next 14 membrane-spanning stretches (helical) occupy residues 4 to 24, 37 to 57, 87 to 107, 113 to 130, 134 to 154, 167 to 187, 208 to 228, 242 to 262, 272 to 292, 305 to 325, 330 to 350, 386 to 406, 416 to 436, and 462 to 482; these read FPWLTIIVVLPISAGSSIGFL, ICICILELLLTTYAFCYHFQL, MGPVLLTGFITTLATLAAWPV, LFHFLMLAMYSGQIGSFS, LLLFFMMWELELIPIYLLLSL, FILYTAGGSIFLLMGVSGMGL, ALEIIFYIGFFIAYAAKSPII, HYSTCMLLAGILLKMGAYGLV, AHSIFSPWLMIIGAIQIIYAA, IAYSSVSHMGFITIGIGSITD, GSILQIISHGFIGAALFFLAG, LALPGMSGFVAESVVFLGIIT, ILITFVMAIGMILTPIYSLSM, and LFILICILLPVIGIGIYPDFV.

This sequence belongs to the complex I subunit 4 family.

The protein resides in the plastid. Its subcellular location is the chloroplast thylakoid membrane. It carries out the reaction a plastoquinone + NADH + (n+1) H(+)(in) = a plastoquinol + NAD(+) + n H(+)(out). The catalysed reaction is a plastoquinone + NADPH + (n+1) H(+)(in) = a plastoquinol + NADP(+) + n H(+)(out). The sequence is that of NAD(P)H-quinone oxidoreductase chain 4, chloroplastic from Illicium oligandrum (Star anise).